Reading from the N-terminus, the 208-residue chain is Small ribosomal subunit protein uS4 (208 aa).

The interval 30–49 (EKRPYAPGEHGRDRRRTESD) is disordered. The 67-residue stretch at 95 to 161 (TRLDNLVLRA…VPFQIAAEGV (67 aa)) folds into the S4 RNA-binding domain.

This sequence belongs to the universal ribosomal protein uS4 family. In terms of assembly, part of the 30S ribosomal subunit. Contacts protein S5. The interaction surface between S4 and S5 is involved in control of translational fidelity.

Its function is as follows. One of the primary rRNA binding proteins, it binds directly to 16S rRNA where it nucleates assembly of the body of the 30S subunit. Functionally, with S5 and S12 plays an important role in translational accuracy. In Bifidobacterium longum (strain DJO10A), this protein is Small ribosomal subunit protein uS4.